We begin with the raw amino-acid sequence, 204 residues long: Large ribosomal subunit protein eL15 (204 aa).

The protein belongs to the eukaryotic ribosomal protein eL15 family. In terms of assembly, component of the large ribosomal subunit.

It localises to the cytoplasm. Component of the large ribosomal subunit. The ribosome is a large ribonucleoprotein complex responsible for the synthesis of proteins in the cell. This Anguilla japonica (Japanese eel) protein is Large ribosomal subunit protein eL15 (rpl15).